The chain runs to 655 residues: Very long-chain specific acyl-CoA dehydrogenase, mitochondrial (655 aa).

A mitochondrion-targeting transit peptide spans 1–40; it reads MQAARIAPSLGRQLLRFGGGSSRPTALLGQPWPGPARRPY. Residues 41–482 form a catalytic region; the sequence is AGGAAQLALD…ALQGCMDKGK (442 aa). Lysine 51 is subject to N6-acetyllysine. Lysine 71 is modified (N6-acetyllysine; alternate). Lysine 71 carries the N6-succinyllysine; alternate modification. Residue lysine 195 is modified to N6-succinyllysine. Residue 214 to 223 coordinates FAD; it reads FCLTEPSSGS. Cysteine 237 bears the S-nitrosocysteine mark. N6-acetyllysine; alternate is present on lysine 239. The residue at position 239 (lysine 239) is an N6-succinyllysine; alternate. 249 to 251 contributes to the FAD binding site; that stretch reads WIS. N6-acetyllysine; alternate is present on residues lysine 276 and lysine 278. Lysine 276 and lysine 278 each carry N6-succinyllysine; alternate. Lysine 298 carries the N6-acetyllysine modification. Residue lysine 331 is modified to N6-acetyllysine; alternate. Lysine 331 carries the N6-succinyllysine; alternate modification. N6-succinyllysine is present on lysine 372. 461–463 serves as a coordination point for substrate; it reads FEG. The active-site Proton acceptor is glutamate 462. 464-466 is a binding site for FAD; the sequence is TND. Lysine 482 is modified (N6-acetyllysine; alternate). Lysine 482 is subject to N6-succinyllysine; alternate. Positions 483-516 are membrane-anchoring; that stretch reads ELSGLGSALKNPFGNAGLLLGEAGKQLRRRAGLG. Residues serine 517 and serine 522 each carry the phosphoserine modification. At lysine 550 the chain carries N6-acetyllysine. Residue lysine 556 is modified to N6-acetyllysine; alternate. Lysine 556 bears the N6-succinyllysine; alternate mark. Glutamine 562 lines the FAD pocket. Lysine 639 carries the post-translational modification N6-succinyllysine.

This sequence belongs to the acyl-CoA dehydrogenase family. As to quaternary structure, homodimer. Homodimerizes after import into the mitochondrion. The cofactor is FAD. Post-translationally, S-nitrosylation at Cys-237 in liver improves catalytic efficiency.

Its subcellular location is the mitochondrion inner membrane. The enzyme catalyses a very-long-chain 2,3-saturated fatty acyl-CoA + oxidized [electron-transfer flavoprotein] + H(+) = a very-long-chain (2E)-enoyl-CoA + reduced [electron-transfer flavoprotein]. It catalyses the reaction dodecanoyl-CoA + oxidized [electron-transfer flavoprotein] + H(+) = (2E)-dodecenoyl-CoA + reduced [electron-transfer flavoprotein]. The catalysed reaction is tetradecanoyl-CoA + oxidized [electron-transfer flavoprotein] + H(+) = (2E)-tetradecenoyl-CoA + reduced [electron-transfer flavoprotein]. It carries out the reaction oxidized [electron-transfer flavoprotein] + hexadecanoyl-CoA + H(+) = (2E)-hexadecenoyl-CoA + reduced [electron-transfer flavoprotein]. The enzyme catalyses octadecanoyl-CoA + oxidized [electron-transfer flavoprotein] + H(+) = (2E)-octadecenoyl-CoA + reduced [electron-transfer flavoprotein]. It catalyses the reaction eicosanoyl-CoA + oxidized [electron-transfer flavoprotein] + H(+) = (2E)-eicosenoyl-CoA + reduced [electron-transfer flavoprotein]. The catalysed reaction is docosanoyl-CoA + oxidized [electron-transfer flavoprotein] + H(+) = (2E)-docosenoyl-CoA + reduced [electron-transfer flavoprotein]. It carries out the reaction tetracosanoyl-CoA + oxidized [electron-transfer flavoprotein] + H(+) = (2E)-tetracosenoyl-CoA + reduced [electron-transfer flavoprotein]. The protein operates within lipid metabolism; mitochondrial fatty acid beta-oxidation. Its function is as follows. Very long-chain specific acyl-CoA dehydrogenase is one of the acyl-CoA dehydrogenases that catalyze the first step of mitochondrial fatty acid beta-oxidation, an aerobic process breaking down fatty acids into acetyl-CoA and allowing the production of energy from fats. The first step of fatty acid beta-oxidation consists in the removal of one hydrogen from C-2 and C-3 of the straight-chain fatty acyl-CoA thioester, resulting in the formation of trans-2-enoyl-CoA. Among the different mitochondrial acyl-CoA dehydrogenases, very long-chain specific acyl-CoA dehydrogenase acts specifically on acyl-CoAs with saturated 12 to 24 carbons long primary chains. The polypeptide is Very long-chain specific acyl-CoA dehydrogenase, mitochondrial (Macaca fascicularis (Crab-eating macaque)).